The chain runs to 498 residues: Acetylcholine receptor subunit alpha-type acr-16 (498 aa).

An N-terminal signal peptide occupies residues 1 to 19 (MSVCTLLISCAILAAPTLG). Residues 20-230 (SLQERRLYED…FYLHMRRRTL (211 aa)) lie on the Extracellular side of the membrane. N-linked (GlcNAc...) asparagine glycans are attached at residues N43 and N93. Cystine bridges form between C147–C161 and C211–C212. 3 helical membrane-spanning segments follow: residues 231–252 (YYGF…LGFT), 261–279 (ITLQ…SIVS), and 295–314 (FFTC…VYVL). Residues 315–472 (NLHYRTPETH…WKFAAMVVDR (158 aa)) are Cytoplasmic-facing. A helical transmembrane segment spans residues 473 to 493 (LCLYVFTIFIIVSTIGIFWSA).

This sequence belongs to the ligand-gated ion channel (TC 1.A.9) family. Acetylcholine receptor (TC 1.A.9.1) subfamily. Expressed in the body wall muscle.

It localises to the postsynaptic cell membrane. The protein resides in the cell membrane. In terms of biological role, after binding acetylcholine, the AChR responds by an extensive change in conformation that affects all subunits and leads to opening of an ion-conducting channel across the plasma membrane. A subunit of the levamisole-insensitive nicotinic receptor. This chain is Acetylcholine receptor subunit alpha-type acr-16 (acr-16), found in Caenorhabditis elegans.